Consider the following 142-residue polypeptide: Cellulose/chitin binding protein BQ2027_MB2009 (142 aa).

A signal peptide spans 1–37; the sequence is MAGLNIYVRRWRTALHATVSALIVAILGLAITPVASA. The 105-residue stretch at 38 to 142 folds into the CBM2 domain; the sequence is ATARATLSVT…CLLNGQYPCT (105 aa).

The protein resides in the secreted. Its subcellular location is the cell wall. The protein localises to the cell membrane. In terms of biological role, carbohydrate binding protein that binds chitin and cellulose. Lacks enzymatic activity and does not hydrolyze chitin and cellulose. May interact with mycobacterial biofilms, which are rich in cellulose, and play a role in biofilm formation. Could also act as an adhesin, improving the initial attachment to host cells and aiding M.bovis during the initial stages of infection. May act as a virulence factor that modulates host immune responses and contributes to host immune evasion. This is Cellulose/chitin binding protein BQ2027_MB2009 from Mycobacterium bovis (strain ATCC BAA-935 / AF2122/97).